The primary structure comprises 628 residues: 2-oxoacid:ferredoxin oxidoreductase 2, subunit alpha (628 aa).

The short motif at 254 to 258 is the YPITP motif element; that stretch reads YPITP. Positions 257 and 344 each coordinate substrate.

As to quaternary structure, heterodimer composed of an alpha and a beta subunit.

The enzyme catalyses a 2-oxocarboxylate + 2 oxidized [2Fe-2S]-[ferredoxin] + CoA = an acyl-CoA + 2 reduced [2Fe-2S]-[ferredoxin] + CO2 + H(+). Catalyzes the coenzyme A-dependent oxidative decarboxylation of different 2-oxoacids such as 2-oxoglutarate, pyruvate and 2-oxobutyrate to form their CoA derivatives. The sequence is that of 2-oxoacid:ferredoxin oxidoreductase 2, subunit alpha from Sulfurisphaera tokodaii (strain DSM 16993 / JCM 10545 / NBRC 100140 / 7) (Sulfolobus tokodaii).